The sequence spans 138 residues: Cysteine desulfuration protein SufE (138 aa).

Catalysis depends on Cys51, which acts as the Cysteine persulfide intermediate.

Belongs to the SufE family. As to quaternary structure, homodimer. Interacts with SufS.

The protein localises to the cytoplasm. It functions in the pathway cofactor biosynthesis; iron-sulfur cluster biosynthesis. In terms of biological role, participates in cysteine desulfuration mediated by SufS. Cysteine desulfuration mobilizes sulfur from L-cysteine to yield L-alanine and constitutes an essential step in sulfur metabolism for biosynthesis of a variety of sulfur-containing biomolecules. Functions as a sulfur acceptor for SufS, by mediating the direct transfer of the sulfur atom from the S-sulfanylcysteine of SufS, an intermediate product of cysteine desulfuration process. The chain is Cysteine desulfuration protein SufE from Shigella flexneri serotype 5b (strain 8401).